The following is a 321-amino-acid chain: Probable arabinan endo-1,5-alpha-L-arabinosidase A (321 aa).

The signal sequence occupies residues 1 to 19 (MYRLLSVASVPLLASLVHG). Residue Asp-34 is the Proton acceptor of the active site. Residue Glu-200 is the Proton donor of the active site. A glycan (N-linked (GlcNAc...) asparagine) is linked at Asn-295.

It belongs to the glycosyl hydrolase 43 family.

It localises to the secreted. The enzyme catalyses Endohydrolysis of (1-&gt;5)-alpha-arabinofuranosidic linkages in (1-&gt;5)-arabinans.. It participates in glycan metabolism; L-arabinan degradation. Functionally, endo-1,5-alpha-L-arabinanase involved in degradation of pectin. Its preferred substrate is linear 1,5-alpha-L-arabinan. In Aspergillus niger (strain ATCC MYA-4892 / CBS 513.88 / FGSC A1513), this protein is Probable arabinan endo-1,5-alpha-L-arabinosidase A (abnA).